The primary structure comprises 91 residues: Small ribosomal subunit protein bS18 (91 aa).

The protein belongs to the bacterial ribosomal protein bS18 family. Part of the 30S ribosomal subunit. Forms a tight heterodimer with protein bS6.

In terms of biological role, binds as a heterodimer with protein bS6 to the central domain of the 16S rRNA, where it helps stabilize the platform of the 30S subunit. The polypeptide is Small ribosomal subunit protein bS18 (Burkholderia ambifaria (strain MC40-6)).